The primary structure comprises 192 residues: Potassium-transporting ATPase KdpC subunit (192 aa).

The helical transmembrane segment at 7 to 27 (PLIVLFVVLAALTGLAYPAVM) threads the bilayer.

Belongs to the KdpC family. As to quaternary structure, the system is composed of three essential subunits: KdpA, KdpB and KdpC.

It is found in the cell inner membrane. Part of the high-affinity ATP-driven potassium transport (or Kdp) system, which catalyzes the hydrolysis of ATP coupled with the electrogenic transport of potassium into the cytoplasm. This subunit acts as a catalytic chaperone that increases the ATP-binding affinity of the ATP-hydrolyzing subunit KdpB by the formation of a transient KdpB/KdpC/ATP ternary complex. This Paraburkholderia xenovorans (strain LB400) protein is Potassium-transporting ATPase KdpC subunit.